Reading from the N-terminus, the 868-residue chain is LPS-assembly protein LptD (868 aa).

The signal sequence occupies residues 1-24; sequence MLKGIHKYLLMCFGTVLFTVQANA.

Belongs to the LptD family. In terms of assembly, component of the lipopolysaccharide transport and assembly complex. Interacts with LptE and LptA.

It is found in the cell outer membrane. Its function is as follows. Together with LptE, is involved in the assembly of lipopolysaccharide (LPS) at the surface of the outer membrane. In Francisella tularensis subsp. tularensis (strain FSC 198), this protein is LPS-assembly protein LptD.